Reading from the N-terminus, the 215-residue chain is Cytochrome b6 (215 aa).

A helical membrane pass occupies residues 32 to 52 (IFYCLGGITLTCFIVQVATGF). Cysteine 35 lines the heme c pocket. Positions 86 and 100 each coordinate heme b. The next 3 helical transmembrane spans lie at 90–110 (ASMMVLNMILHVCRVYLTGGF), 116–136 (LTWVTGVLLASVTVSFGVTGY), and 186–206 (AHTFVLPVVAAVLMLTHFVMI). Residues histidine 187 and histidine 202 each contribute to the heme b site.

This sequence belongs to the cytochrome b family. PetB subfamily. The 4 large subunits of the cytochrome b6-f complex are cytochrome b6, subunit IV (17 kDa polypeptide, PetD), cytochrome f and the Rieske protein, while the 4 small subunits are PetG, PetL, PetM and PetN. The complex functions as a dimer. Heme b serves as cofactor. It depends on heme c as a cofactor.

Its subcellular location is the plastid. The protein resides in the chloroplast thylakoid membrane. In terms of biological role, component of the cytochrome b6-f complex, which mediates electron transfer between photosystem II (PSII) and photosystem I (PSI), cyclic electron flow around PSI, and state transitions. The sequence is that of Cytochrome b6 from Emiliania huxleyi (Coccolithophore).